The primary structure comprises 322 residues: Crystallin J1A (322 aa).

It belongs to the ADP-ribosylglycohydrolase family. J1 crystallin subfamily. In terms of tissue distribution, expressed in the rhopalia. Present in both the large and small eyes.

This Tripedalia cystophora (Jellyfish) protein is Crystallin J1A.